Here is a 370-residue protein sequence, read N- to C-terminus: Actin-related protein 2/3 complex subunit 1A (370 aa).

6 WD repeats span residues phenylalanine 6–alanine 45, glutamate 50–threonine 89, proline 140–lysine 179, glycine 202–threonine 241, threonine 244–serine 284, and leucine 322–glutamine 365.

This sequence belongs to the WD repeat ARPC1 family. In terms of assembly, probable component of the Arp2/3 complex in which it may replace ARPC1B.

It localises to the cytoplasm. Its subcellular location is the cytoskeleton. It is found in the nucleus. Probably functions as a component of the Arp2/3 complex which is involved in regulation of actin polymerization and together with an activating nucleation-promoting factor (NPF) mediates the formation of branched actin networks. In addition to its role in the cytoplasmic cytoskeleton, the Arp2/3 complex also promotes actin polymerization in the nucleus, thereby regulating gene transcription and repair of damaged DNA. In Rattus norvegicus (Rat), this protein is Actin-related protein 2/3 complex subunit 1A (Arpc1a).